The sequence spans 133 residues: Profilin-3 (133 aa).

Cys-13 and Cys-117 are disulfide-bonded. Positions Ala-83–Thr-99 match the Involved in PIP2 interaction motif. Thr-113 is subject to Phosphothreonine.

The protein belongs to the profilin family. As to quaternary structure, occurs in many kinds of cells as a complex with monomeric actin in a 1:1 ratio. Post-translationally, phosphorylated by MAP kinases.

It is found in the cytoplasm. The protein localises to the cytoskeleton. Binds to actin and affects the structure of the cytoskeleton. At high concentrations, profilin prevents the polymerization of actin, whereas it enhances it at low concentrations. The sequence is that of Profilin-3 from Corylus avellana (European hazel).